A 354-amino-acid polypeptide reads, in one-letter code: AT-rich binding protein (354 aa).

The C2H2-type 1 zinc-finger motif lies at 31–54; the sequence is IVCHTCQEELQTQDKFWKHIQDEH. Disordered stretches follow at residues 84-124 and 256-276; these read LPLY…HDDQ and EVQQ…SSAM. Basic and acidic residues-rich tracts occupy residues 89 to 100 and 109 to 124; these read KVSENDQQRDDV and QKEP…HDDQ. Over residues 264–276 the composition is skewed to low complexity; the sequence is TNNSTTASASSAM. 2 consecutive C2H2-type zinc fingers follow at residues 285–309 and 315–338; these read YICD…RSVH and FACE…KKKH.

As to quaternary structure, homooctamer. Fat body.

The protein resides in the nucleus. May be a transcription factor for genes having (A+T) stretches in their promoter and/or enhancer regions. Binds to AT rich DNA. The chain is AT-rich binding protein from Sarcophaga peregrina (Flesh fly).